The sequence spans 162 residues: Probable metalloprotease y4jG (162 aa).

An MPN domain is found at threonine 9–asparagine 147. The Zn(2+) site is built by histidine 94, histidine 96, and aspartate 107.

It belongs to the peptidase M67B family.

The chain is Probable metalloprotease y4jG from Sinorhizobium fredii (strain NBRC 101917 / NGR234).